The primary structure comprises 607 residues: Elongation factor 4 (607 aa).

In terms of domain architecture, tr-type G spans 11-193; that stretch reads EKIRNFSIIA…QIVEKVPAPT (183 aa). GTP contacts are provided by residues 23 to 28 and 140 to 143; these read DHGKST and NKID.

The protein belongs to the TRAFAC class translation factor GTPase superfamily. Classic translation factor GTPase family. LepA subfamily.

It is found in the cell membrane. The enzyme catalyses GTP + H2O = GDP + phosphate + H(+). In terms of biological role, required for accurate and efficient protein synthesis under certain stress conditions. May act as a fidelity factor of the translation reaction, by catalyzing a one-codon backward translocation of tRNAs on improperly translocated ribosomes. Back-translocation proceeds from a post-translocation (POST) complex to a pre-translocation (PRE) complex, thus giving elongation factor G a second chance to translocate the tRNAs correctly. Binds to ribosomes in a GTP-dependent manner. The polypeptide is Elongation factor 4 (Streptococcus gordonii (strain Challis / ATCC 35105 / BCRC 15272 / CH1 / DL1 / V288)).